Reading from the N-terminus, the 142-residue chain is Alpha-lactalbumin (142 aa).

Residues 1 to 18 form the signal peptide; sequence MMSFVSLLLVGILFHATQ. The region spanning 20-142 is the C-type lysozyme domain; sequence EQLTKCEVFR…KLDQWLCEKL (123 aa). 4 disulfides stabilise this stretch: Cys25–Cys139, Cys47–Cys130, Cys80–Cys96, and Cys92–Cys110. N-linked (GlcNAc...) asparagine glycosylation is found at Asn64 and Asn93. Lys98, Asp101, Asp103, Asp106, and Asp107 together coordinate Ca(2+).

This sequence belongs to the glycosyl hydrolase 22 family. In terms of assembly, lactose synthase (LS) is a heterodimer of a catalytic component, beta1,4-galactosyltransferase (beta4Gal-T1) and a regulatory component, alpha-lactalbumin (LA). In terms of tissue distribution, mammary gland specific. Secreted in milk.

The protein resides in the secreted. Functionally, regulatory subunit of lactose synthase, changes the substrate specificity of galactosyltransferase in the mammary gland making glucose a good acceptor substrate for this enzyme. This enables LS to synthesize lactose, the major carbohydrate component of milk. In other tissues, galactosyltransferase transfers galactose onto the N-acetylglucosamine of the oligosaccharide chains in glycoproteins. In Bubalus bubalis (Domestic water buffalo), this protein is Alpha-lactalbumin (LALBA).